The following is a 410-amino-acid chain: L-sorbose 1-phosphate reductase (410 aa).

The Zn(2+) site is built by Cys40, His69, and Glu70. NAD(+) is bound by residues Arg221 and 309-310; that span reads GT.

The protein belongs to the zinc-containing alcohol dehydrogenase family. It depends on Zn(2+) as a cofactor.

Its function is as follows. Reduces L-sorbose 1-phosphate to D-glucitol 6-phosphate. This chain is L-sorbose 1-phosphate reductase (sorE), found in Klebsiella pneumoniae.